The following is a 451-amino-acid chain: PTS system cellobiose-specific EIIC component (451 aa).

The region spanning 8–423 is the PTS EIIC type-3 domain; the sequence is LEDRVMPVAG…FIAFAIYYPF (416 aa). A run of 10 helical transmembrane segments spans residues 31–51, 72–92, 104–124, 138–158, 187–207, 227–247, 250–270, 293–313, 347–367, and 407–427; these read GIIL…VGFL, LLYP…FGVA, LSAG…QVPF, GIPV…LAIV, FVAL…RLIL, LSVL…VQLL, TGLH…LSLM, FFDL…ALTM, IVMN…LVVV, and ILQI…FSIW.

Its subcellular location is the cell membrane. The phosphoenolpyruvate-dependent sugar phosphotransferase system (sugar PTS), a major carbohydrate active transport system, catalyzes the phosphorylation of incoming sugar substrates concomitantly with their translocation across the cell membrane. The enzyme II CelABD PTS system is involved in cellobiose transport. This is PTS system cellobiose-specific EIIC component from Geobacillus stearothermophilus (Bacillus stearothermophilus).